The following is a 118-amino-acid chain: Small ribosomal subunit protein uS13 (118 aa).

The disordered stretch occupies residues 94-118 (GLPLRGQRTKTNARTRKGPRKPIKK).

It belongs to the universal ribosomal protein uS13 family. As to quaternary structure, part of the 30S ribosomal subunit. Forms a loose heterodimer with protein S19. Forms two bridges to the 50S subunit in the 70S ribosome.

Functionally, located at the top of the head of the 30S subunit, it contacts several helices of the 16S rRNA. In the 70S ribosome it contacts the 23S rRNA (bridge B1a) and protein L5 of the 50S subunit (bridge B1b), connecting the 2 subunits; these bridges are implicated in subunit movement. Contacts the tRNAs in the A and P-sites. The protein is Small ribosomal subunit protein uS13 of Cellvibrio japonicus (strain Ueda107) (Pseudomonas fluorescens subsp. cellulosa).